We begin with the raw amino-acid sequence, 116 residues long: Large ribosomal subunit protein bL17 (116 aa).

Belongs to the bacterial ribosomal protein bL17 family. As to quaternary structure, part of the 50S ribosomal subunit. Contacts protein L32.

The sequence is that of Large ribosomal subunit protein bL17 from Thermosynechococcus vestitus (strain NIES-2133 / IAM M-273 / BP-1).